Consider the following 158-residue polypeptide: Interleukin-36 alpha (158 aa).

A propeptide spanning residues 1–5 (MEKAL) is cleaved from the precursor. 3'-nitrotyrosine is present on tyrosine 96.

The protein belongs to the IL-1 family. In terms of assembly, interacts with TMED10; the interaction mediates the translocation from the cytoplasm into the ERGIC (endoplasmic reticulum-Golgi intermediate compartment) and thereby secretion. N-terminal truncation leads to a dramatic enhancement of its activity (&gt;1000-fold). In terms of tissue distribution, expressed in immune system and fetal brain, but not in other tissues tested or in multiple hematopoietic cell lines. Predominantly expressed in skin keratinocytes but not in fibroblasts, endothelial cells or melanocytes. Increased in lesional psoriasis skin.

The protein localises to the cytoplasm. It localises to the secreted. Functionally, cytokine that binds to and signals through the IL1RL2/IL-36R receptor which in turn activates NF-kappa-B and MAPK signaling pathways in target cells linked to a pro-inflammatory response. Part of the IL-36 signaling system that is thought to be present in epithelial barriers and to take part in local inflammatory response; similar to the IL-1 system with which it shares the coreceptor IL1RAP. Seems to be involved in skin inflammatory response by acting on keratinocytes, dendritic cells and indirectly on T-cells to drive tissue infiltration, cell maturation and cell proliferation. In cultured keratinocytes induces the expression of macrophage, T-cell, and neutrophil chemokines, such as CCL3, CCL4, CCL5, CCL2, CCL17, CCL22, CL20, CCL5, CCL2, CCL17, CCL22, CXCL8, CCL20 and CXCL1, and the production of pro-inflammatory cytokines such as TNF-alpha, IL-8 and IL-6. In cultured monocytes up-regulates expression of IL-1A, IL-1B and IL-6. In myeloid dendritic cells involved in cell maturation by up-regulating surface expression of CD83, CD86 and HLA-DR. In monocyte-derived dendritic cells facilitates dendritic cell maturation and drives T-cell proliferation. May play a role in pro-inflammatory effects in the lung. The sequence is that of Interleukin-36 alpha from Homo sapiens (Human).